A 2793-amino-acid polypeptide reads, in one-letter code: Iterative polyketide synthase afoE (2793 aa).

The tract at residues Met1 to Pro401 is N-terminal acylcarrier protein transacylase domain (SAT). Cys157 functions as the Nucleophile; for transacylase activity in the catalytic mechanism. His279 functions as the Proton donor/acceptor; for transacylase activity in the catalytic mechanism. A Ketosynthase family 3 (KS3) domain is found at Ser435–Gln862. Residues Cys611, His746, and His785 each act as for beta-ketoacyl synthase activity in the active site. Residues Phe977–Arg1265 are malonyl-CoA:ACP transacylase (MAT). The tract at residues Trp1384–Asp1515 is N-terminal hotdog fold. Positions Trp1384 to Ser1698 constitute a PKS/mFAS DH domain. The segment at Tyr1411–Ser1696 is product template (PT) domain. His1415 (proton acceptor; for dehydratase activity) is an active-site residue. The C-terminal hotdog fold stretch occupies residues Val1550–Ser1698. Asp1607 (proton donor; for dehydratase activity) is an active-site residue. Residues Pro1734–Arg1776 form a disordered region. Basic residues predominate over residues Lys1747–Ser1769. A Carrier domain is found at Arg1776 to Leu1850. Ser1810 is subject to O-(pantetheine 4'-phosphoryl)serine. Residues Pro1853–Leu1903 are disordered. A compositionally biased stretch (acidic residues) spans Glu1859–Lys1868. The segment at Asn2115 to Pro2294 is methyltransferase domain. The interval Ser2360–Arg2379 is disordered. Residues Val2387–Ala2630 form an NADPH-binding domain region.

Pantetheine 4'-phosphate is required as a cofactor.

It catalyses the reaction (3E,5E,7S)-5,7-dimethyl-2-oxonona-3,5-dienyl-[ACP] + 4 malonyl-CoA + AH2 + S-adenosyl-L-methionine + 3 H(+) = 6-[(3E,5E,7S)-5,7-dimethyl-2-oxonona-3,5-dienyl]-2,4-dihydroxy-3-methylbenzaldehyde + holo-[ACP] + A + S-adenosyl-L-homocysteine + 4 CO2 + 4 CoA + H2O. It functions in the pathway secondary metabolite biosynthesis. In terms of biological role, iterative polyketide synthase; part of the gene cluster that mediates the biosynthesis of asperfuranone, a probable antitumor agent. The polyketide synthase afoG is responsible for producing the 3,5-dimethyloctadienone moiety from acetyl-CoA, three malonyl-CoA, and two S-adenosyl methionines (SAM). The 3,5-dimethyloctadienone moiety is then loaded onto the SAT domain of afoE and extended with four malonyl-CoA and one SAM, which leads to the formation of 2,4-dihydroxy-6-(5,7-dimethyl-2-oxo-trans-3-trans-5-nonadienyl)-3-methylbenzaldehyde (compound 2) after reductive release and aldol condensation. AfoD is the next enzyme in the biosynthesis sequence and hydroxylates the side chain at the benzylic position of compound 2. After benzylic hydroxylation, a furan ring is formed after five-member ring hemiacetal formation and water elimination. AfoF and afoC are proposed to oxidize the R-diketone proton and to reduce the unconjugated carbonyl group, respectively, to generate asperfuranone. Since no intermediates could be isolated from afoF and afoC deletants, the sequence of these two enzymes is not fully understood. Moreover, since afoC deletant still produces a small amount of asperfuranone, other endogenous oxidoreductases might catalyze the same reaction with much less efficiency. This Emericella nidulans (strain FGSC A4 / ATCC 38163 / CBS 112.46 / NRRL 194 / M139) (Aspergillus nidulans) protein is Iterative polyketide synthase afoE.